The primary structure comprises 185 residues: GTP-dependent dephospho-CoA kinase (185 aa).

GTP is bound by residues aspartate 50, valine 52, aspartate 73, lysine 75, and glutamate 128.

It belongs to the GTP-dependent DPCK family.

It carries out the reaction 3'-dephospho-CoA + GTP = GDP + CoA + H(+). It participates in cofactor biosynthesis; coenzyme A biosynthesis. Functionally, catalyzes the GTP-dependent phosphorylation of the 3'-hydroxyl group of dephosphocoenzyme A to form coenzyme A (CoA). The protein is GTP-dependent dephospho-CoA kinase of Aeropyrum pernix (strain ATCC 700893 / DSM 11879 / JCM 9820 / NBRC 100138 / K1).